Reading from the N-terminus, the 730-residue chain is Catalase R (730 aa).

Residue histidine 105 is part of the active site. Position 392 (tyrosine 392) interacts with heme. A disordered region spans residues proline 403–asparagine 433.

Belongs to the catalase family. Requires heme as cofactor.

It carries out the reaction 2 H2O2 = O2 + 2 H2O. Functionally, occurs in almost all aerobically respiring organisms and serves to protect cells from the toxic effects of hydrogen peroxide. The sequence is that of Catalase R (catR) from Aspergillus niger.